A 68-amino-acid chain; its full sequence is Beta-toxin Im-2 (68 aa).

The LCN-type CS-alpha/beta domain maps to 1–67; it reads KDGYPMVRAG…VWTYEKNTCK (67 aa). Disulfide bonds link cysteine 15–cysteine 66, cysteine 19–cysteine 40, cysteine 26–cysteine 47, and cysteine 30–cysteine 49.

Belongs to the long (4 C-C) scorpion toxin superfamily. Sodium channel inhibitor family. Beta subfamily. As to expression, expressed by the venom gland.

The protein resides in the secreted. Functionally, beta toxins bind voltage-independently at site-4 of sodium channels (Nav) and shift the voltage of activation toward more negative potentials thereby affecting sodium channel activation and promoting spontaneous and repetitive firing. Is toxic to both insect and mammals. Induces paralysis in Acheta domestica crickets, but does not induce death, whereas intracerebroventricular injection into mice causes immediate death (at a dose of 0.05 ug/g). This Isometrus maculatus (Lesser brown scorpion) protein is Beta-toxin Im-2.